A 104-amino-acid polypeptide reads, in one-letter code: ATP-dependent Clp protease adapter protein ClpS (104 aa).

The protein belongs to the ClpS family. In terms of assembly, binds to the N-terminal domain of the chaperone ClpA.

Its function is as follows. Involved in the modulation of the specificity of the ClpAP-mediated ATP-dependent protein degradation. The chain is ATP-dependent Clp protease adapter protein ClpS from Oleidesulfovibrio alaskensis (strain ATCC BAA-1058 / DSM 17464 / G20) (Desulfovibrio alaskensis).